We begin with the raw amino-acid sequence, 211 residues long: uncharacterized protein (211 aa).

The signal sequence occupies residues 1–27; sequence MKRTSAALVVFLILLFLGLLFLPMFIV.

This is an uncharacterized protein from Archaeoglobus fulgidus (strain ATCC 49558 / DSM 4304 / JCM 9628 / NBRC 100126 / VC-16).